We begin with the raw amino-acid sequence, 284 residues long: 2-dehydro-3-deoxyphosphooctonate aldolase (284 aa).

Belongs to the KdsA family.

It localises to the cytoplasm. It carries out the reaction D-arabinose 5-phosphate + phosphoenolpyruvate + H2O = 3-deoxy-alpha-D-manno-2-octulosonate-8-phosphate + phosphate. It functions in the pathway carbohydrate biosynthesis; 3-deoxy-D-manno-octulosonate biosynthesis; 3-deoxy-D-manno-octulosonate from D-ribulose 5-phosphate: step 2/3. Its pathway is bacterial outer membrane biogenesis; lipopolysaccharide biosynthesis. The polypeptide is 2-dehydro-3-deoxyphosphooctonate aldolase (Yersinia pseudotuberculosis serotype O:1b (strain IP 31758)).